A 306-amino-acid chain; its full sequence is MINSPPIGYLPGMRTMWRGAISFGLVNIGVRLYAATADHDYQFHQVHRQDHGRIHHKRVCEECGREIDYDDIVKGYETSDGELVVLDSQDLRKLPIRTDRAIDLLECVPAEQVDPTYFQKTYYLEPEKSARRPYVLLREALRRTDLLAVVKITMRQRETLATIRPAGDVLVLHTMLWPDEIRRPDFDFLTDDAGDTEVSKQEIDMATSLVENMTEDFDPTEFTDDYQRALAELIDAKTKGTKPPRKRPEPADEGEVVDLMGALERSVDQARTSRTSRRKTTASASRRRSSSNREKTGSRDKTRKRA.

A Ku domain is found at 21 to 206 (ISFGLVNIGV…EVSKQEIDMA (186 aa)). Positions 233 to 306 (LIDAKTKGTK…GSRDKTRKRA (74 aa)) are disordered. Residues 274 to 290 (RTSRRKTTASASRRRSS) show a composition bias toward basic residues. Positions 291–300 (SNREKTGSRD) are enriched in basic and acidic residues.

This sequence belongs to the prokaryotic Ku family. Homodimer. Interacts with LigD.

Functionally, with LigD forms a non-homologous end joining (NHEJ) DNA repair enzyme, which repairs dsDNA breaks with reduced fidelity. Binds linear dsDNA with 5'- and 3'- overhangs but not closed circular dsDNA nor ssDNA. Recruits and stimulates the ligase activity of LigD. The protein is Non-homologous end joining protein Ku 2 of Saccharopolyspora erythraea (strain ATCC 11635 / DSM 40517 / JCM 4748 / NBRC 13426 / NCIMB 8594 / NRRL 2338).